A 380-amino-acid polypeptide reads, in one-letter code: Cytochrome b (380 aa).

Transmembrane regions (helical) follow at residues 34 to 54 (FGSL…LLAA), 78 to 99 (WLIR…YLHI), 114 to 134 (WNTG…GYVL), and 179 to 199 (FFTL…IHLT). Residues H84 and H98 each coordinate heme b. Heme b contacts are provided by H183 and H197. H202 is a binding site for a ubiquinone. Helical transmembrane passes span 227–247 (LKDI…ALFS), 289–309 (LGGV…PLLH), 321–341 (FSQL…WVGS), and 348–368 (FIII…ILFP).

This sequence belongs to the cytochrome b family. In terms of assembly, the cytochrome bc1 complex contains 11 subunits: 3 respiratory subunits (MT-CYB, CYC1 and UQCRFS1), 2 core proteins (UQCRC1 and UQCRC2) and 6 low-molecular weight proteins (UQCRH/QCR6, UQCRB/QCR7, UQCRQ/QCR8, UQCR10/QCR9, UQCR11/QCR10 and a cleavage product of UQCRFS1). This cytochrome bc1 complex then forms a dimer. Heme b serves as cofactor.

It localises to the mitochondrion inner membrane. Its function is as follows. Component of the ubiquinol-cytochrome c reductase complex (complex III or cytochrome b-c1 complex) that is part of the mitochondrial respiratory chain. The b-c1 complex mediates electron transfer from ubiquinol to cytochrome c. Contributes to the generation of a proton gradient across the mitochondrial membrane that is then used for ATP synthesis. This is Cytochrome b (MT-CYB) from Bugeranus carunculatus (Wattled crane).